The following is a 477-amino-acid chain: Monocarboxylate transporter 12-B (477 aa).

Over 1 to 9 the chain is Cytoplasmic; that stretch reads MAQEKKKGG. Helical transmembrane passes span 10 to 30, 58 to 78, 86 to 106, 116 to 136, 148 to 168, 178 to 198, 253 to 273, 289 to 309, 320 to 340, 344 to 364, 383 to 403, and 413 to 433; these read VLPP…VVTV, AWIH…GSLI, IAVI…SFAT, GLLT…MVGI, IAMS…QLLI, LILG…RPII, FLVL…PFVY, AFLM…FGWL, NICY…IPLL, VWLV…VALI, VVYF…GWLV, and FFLS…VAII. Topologically, residues 434–477 are cytoplasmic; sequence RYCQRNQKKNSLSKIPKLVSCEGKQVDYYPPKNKDLMLIIPATS.

This sequence belongs to the major facilitator superfamily. Monocarboxylate porter (TC 2.A.1.13) family.

It is found in the cell membrane. It localises to the basolateral cell membrane. It carries out the reaction creatine(in) = creatine(out). The enzyme catalyses guanidinoacetate(in) = guanidinoacetate(out). In terms of biological role, functions as a transporter for creatine and as well for its precursor guanidinoacetate. Transport of creatine and GAA is independent of resting membrane potential and extracellular Na(+), Cl(-), or pH. Contributes to the process of creatine biosynthesis and distribution. This is Monocarboxylate transporter 12-B (slc16a12b) from Danio rerio (Zebrafish).